The chain runs to 214 residues: Methyltransferase HEMK2 (214 aa).

S-adenosyl-L-methionine-binding residues include Thr29, Glu51, Gly53, Asp77, Asp103, Leu104, and Asn122. A protein is bound at residue Asn122.

The protein belongs to the eukaryotic/archaeal PrmC-related family. As to quaternary structure, heterodimer; heterodimerization with TRMT112 is required for S-adenosyl-L-methionine-binding. In terms of processing, ubiquitinated, leading to its degradation by the proteasome. Highly expressed in undifferentiated embryonic stem cells (at protein level). Also expressed in testis and brain, weakly expressed in differentiated embryonic stem cells and kidney. Not expressed in muscle, heart, placenta, pancreas, lung and stomach.

Its subcellular location is the nucleus. The catalysed reaction is L-lysyl-[histone] + S-adenosyl-L-methionine = N(6)-methyl-L-lysyl-[histone] + S-adenosyl-L-homocysteine + H(+). The enzyme catalyses L-glutaminyl-[protein] + S-adenosyl-L-methionine = N(5)-methyl-L-glutaminyl-[protein] + S-adenosyl-L-homocysteine + H(+). It catalyses the reaction methylarsonous acid + S-adenosyl-L-methionine = dimethylarsinate + S-adenosyl-L-homocysteine + 2 H(+). Its function is as follows. Methyltransferase that can methylate proteins and, to a lower extent, arsenic. Catalytic subunit of a heterodimer with TRMT112, which monomethylates 'Lys-12' of histone H4 (H4K12me1), a modification present at the promoters of numerous genes encoding cell cycle regulators. Catalytic subunit of a heterodimer with TRMT112, which catalyzes N5-methylation of Glu residue of proteins with a Gly-Gln-Xaa-Xaa-Xaa-Arg motif. Methylates ETF1 on 'Gln-185'; ETF1 needs to be complexed to ERF3 in its GTP-bound form to be efficiently methylated. May also play a role in the modulation of arsenic-induced toxicity by mediating the conversion of monomethylarsonous acid (3+) into the less toxic dimethylarsonic acid. It however only plays a limited role in arsenic metabolism compared with AS3MT. This chain is Methyltransferase HEMK2, found in Mus musculus (Mouse).